Here is a 278-residue protein sequence, read N- to C-terminus: Extracellular metalloprotease MCYG_03238 (278 aa).

An N-terminal signal peptide occupies residues 1–19 (MRFSIVLSSIAALSSVAAA). N-linked (GlcNAc...) asparagine glycosylation is present at asparagine 52. Residue histidine 170 participates in Zn(2+) binding. The active site involves glutamate 171. Histidine 174 provides a ligand contact to Zn(2+). Cysteine 209 and cysteine 255 are joined by a disulfide.

This sequence belongs to the peptidase M43B family.

The protein localises to the secreted. Its function is as follows. Secreted metalloproteinase that allows assimilation of proteinaceous substrates. Plays a pivotal role as a pathogenicity determinant during infections and contributes to the ability of the pathogen to persist within the mammalian host. In Arthroderma otae (strain ATCC MYA-4605 / CBS 113480) (Microsporum canis), this protein is Extracellular metalloprotease MCYG_03238.